A 513-amino-acid chain; its full sequence is Putative ribose/galactose/methyl galactoside import ATP-binding protein 2 (513 aa).

2 ABC transporter domains span residues 24-260 (LSAE…VGRE) and 270-510 (VPIG…VMEL). Residue 56 to 63 (GENGAGKS) participates in ATP binding.

Belongs to the ABC transporter superfamily. Carbohydrate importer 2 (CUT2) (TC 3.A.1.2) family.

It is found in the cell inner membrane. It carries out the reaction D-ribose(out) + ATP + H2O = D-ribose(in) + ADP + phosphate + H(+). The catalysed reaction is D-galactose(out) + ATP + H2O = D-galactose(in) + ADP + phosphate + H(+). Its function is as follows. Part of an ABC transporter complex involved in carbohydrate import. Could be involved in ribose, galactose and/or methyl galactoside import. Responsible for energy coupling to the transport system. The protein is Putative ribose/galactose/methyl galactoside import ATP-binding protein 2 of Rhizobium etli (strain ATCC 51251 / DSM 11541 / JCM 21823 / NBRC 15573 / CFN 42).